Here is an 88-residue protein sequence, read N- to C-terminus: Small ribosomal subunit protein bS20 (88 aa).

The protein belongs to the bacterial ribosomal protein bS20 family.

Functionally, binds directly to 16S ribosomal RNA. The protein is Small ribosomal subunit protein bS20 of Bradyrhizobium diazoefficiens (strain JCM 10833 / BCRC 13528 / IAM 13628 / NBRC 14792 / USDA 110).